The following is a 388-amino-acid chain: Alanine racemase 3 (388 aa).

The active-site Proton acceptor; specific for D-alanine is the Lys-41. Lys-41 carries the post-translational modification N6-(pyridoxal phosphate)lysine. Arg-135 contacts substrate. Tyr-256 functions as the Proton acceptor; specific for L-alanine in the catalytic mechanism. Met-304 provides a ligand contact to substrate.

It belongs to the alanine racemase family. The cofactor is pyridoxal 5'-phosphate.

It carries out the reaction L-alanine = D-alanine. Its pathway is amino-acid biosynthesis; D-alanine biosynthesis; D-alanine from L-alanine: step 1/1. Catalyzes the interconversion of L-alanine and D-alanine. May also act on other amino acids. This chain is Alanine racemase 3 (alr3), found in Mesorhizobium japonicum (strain LMG 29417 / CECT 9101 / MAFF 303099) (Mesorhizobium loti (strain MAFF 303099)).